Here is an 85-residue protein sequence, read N- to C-terminus: Probable oxaloacetate decarboxylase gamma chain (85 aa).

Residues 11 to 33 traverse the membrane as a helical segment; it reads AAALMVTGMGVVFIFLTILIFLV.

The protein belongs to the OadG family. As to quaternary structure, heterotrimer of an alpha, a beta and a gamma subunit. Na(+) serves as cofactor.

The protein localises to the cell membrane. It carries out the reaction oxaloacetate + 2 Na(+)(in) + H(+) = pyruvate + 2 Na(+)(out) + CO2. In terms of biological role, catalyzes the decarboxylation of oxaloacetate coupled to Na(+) translocation. The protein is Probable oxaloacetate decarboxylase gamma chain of Vibrio vulnificus (strain CMCP6).